Reading from the N-terminus, the 428-residue chain is Putative zinc metalloprotease SAR1238 (428 aa).

Zn(2+) is bound at residue H21. E22 is a catalytic residue. H25 provides a ligand contact to Zn(2+). 4 consecutive transmembrane segments (helical) span residues 172 to 194, 309 to 331, 352 to 374, and 401 to 420; these read FLTLFAGPLFNFILALVLFIGLA, GSTYIFSAVVGMLASIFTGGFSF, IISLIGYTALLSVNLGIMNLIPI, and TTIIAIGAIFMVVIMILVTW. A PDZ domain is found at 186–269; the sequence is ALVLFIGLAY…TKSVELTPKK (84 aa).

It belongs to the peptidase M50B family. Zn(2+) serves as cofactor.

Its subcellular location is the cell membrane. This Staphylococcus aureus (strain MRSA252) protein is Putative zinc metalloprotease SAR1238.